A 222-amino-acid polypeptide reads, in one-letter code: Ras-related protein Rab-21 (222 aa).

Ala-2 is subject to N-acetylalanine. GTP-binding residues include Gly-26, Gly-29, Lys-30, Thr-31, Ser-32, Asn-43, Asp-44, His-46, Thr-48, and Thr-49. A Mg(2+)-binding site is contributed by Thr-31. The short motif at 41–54 (KFNDKHITTLQASF) is the Switch 1 element. Positions 49 and 72 each coordinate Mg(2+). The short motif at 74 to 92 (AGQERFHALGPIYYRDSNG) is the Switch 2 element. Residues Gly-75, Asn-130, Lys-131, Asp-133, Ala-161, and Lys-162 each coordinate GTP. 2 S-geranylgeranyl cysteine lipidation sites follow: Cys-218 and Cys-219. Cys-219 carries the post-translational modification Cysteine methyl ester. Residues 220-222 (SSG) constitute a propeptide, removed in mature form.

This sequence belongs to the small GTPase superfamily. Rab family. As to quaternary structure, interacts with the cytoplasmic tail of integrins ITGA1, ITGA2, ITGA5, ITGA6, ITGA11 and ITGB1; this interaction is dependent upon its GDP/GTP cycle. Interacts with RABGEF1 (via VPS9 domain). Interacts with ANKRD27. Interacts with VAMP7. Interacts (in GTP-bound form) with VAMP8 in response to starvation; the interaction probably regulates VAMP8 endolysosomal trafficking. Interacts (active GTP-bound form) with TMED10; the interaction is indirect and regulates TMED10 abundance and localization at the Golgi. The cofactor is Mg(2+).

Its subcellular location is the endoplasmic reticulum membrane. The protein resides in the golgi apparatus. It is found in the trans-Golgi network. The protein localises to the golgi apparatus membrane. It localises to the early endosome membrane. Its subcellular location is the cytoplasmic vesicle membrane. The protein resides in the cleavage furrow. It is found in the cell projection. The protein localises to the neuron projection. It catalyses the reaction GTP + H2O = GDP + phosphate + H(+). Regulated by guanine nucleotide exchange factors (GEFs) including ANKRD27 and RABGEF1, which promote the exchange of bound GDP for free GTP. Regulated by GTPase activating proteins (GAPs) which increase the GTP hydrolysis activity. Inhibited by GDP dissociation inhibitors (GDIs). In terms of biological role, the small GTPases Rab are key regulators of intracellular membrane trafficking, from the formation of transport vesicles to their fusion with membranes. Rabs cycle between an inactive GDP-bound form and an active GTP-bound form that is able to recruit to membranes different sets of downstream effectors directly responsible for vesicle formation, movement, tethering and fusion. RAB21 is involved in membrane trafficking control. Regulates integrin internalization and recycling, but does not influence the traffic of endosomally translocated receptors in general. As a result, may regulate cell adhesion and migration. During the mitosis of adherent cells, controls the endosomal trafficking of integrins which is required for the successful completion of cytokinesis. Involved in neurite growth. Following SBF2/MTMT13-mediated activation in response to starvation-induced autophagy, binds to and regulates SNARE protein VAMP8 endolysosomal transport required for SNARE-mediated autophagosome-lysosome fusion. Modulates protein levels of the cargo receptors TMED2 and TMED10, and required for appropriate Golgi localization of TMED10. The polypeptide is Ras-related protein Rab-21 (Mus musculus (Mouse)).